Here is a 190-residue protein sequence, read N- to C-terminus: Anthranilate synthase component II (190 aa).

Positions 1 to 190 (MILIIDNYDS…ENFCTGIAKA (190 aa)) constitute a Glutamine amidotransferase type-1 domain. Position 51-53 (51-53 (GPG)) interacts with L-glutamine. Cysteine 76 functions as the Nucleophile; for GATase activity in the catalytic mechanism. Residues glutamine 80 and 126 to 127 (SL) each bind L-glutamine. Catalysis depends on residues histidine 167 and glutamate 169.

In terms of assembly, tetramer of two components I and two components II.

It catalyses the reaction chorismate + L-glutamine = anthranilate + pyruvate + L-glutamate + H(+). It functions in the pathway amino-acid biosynthesis; L-tryptophan biosynthesis; L-tryptophan from chorismate: step 1/5. This is Anthranilate synthase component II (trpG2) from Haloarcula marismortui (strain ATCC 43049 / DSM 3752 / JCM 8966 / VKM B-1809) (Halobacterium marismortui).